We begin with the raw amino-acid sequence, 40 residues long: Photosystem II reaction center protein J (40 aa).

A helical membrane pass occupies residues 8–28; sequence IPLWIIGTVAGILVIGLIGIF.

It belongs to the PsbJ family. In terms of assembly, PSII is composed of 1 copy each of membrane proteins PsbA, PsbB, PsbC, PsbD, PsbE, PsbF, PsbH, PsbI, PsbJ, PsbK, PsbL, PsbM, PsbT, PsbX, PsbY, PsbZ, Psb30/Ycf12, at least 3 peripheral proteins of the oxygen-evolving complex and a large number of cofactors. It forms dimeric complexes.

Its subcellular location is the plastid. It is found in the chloroplast thylakoid membrane. Its function is as follows. One of the components of the core complex of photosystem II (PSII). PSII is a light-driven water:plastoquinone oxidoreductase that uses light energy to abstract electrons from H(2)O, generating O(2) and a proton gradient subsequently used for ATP formation. It consists of a core antenna complex that captures photons, and an electron transfer chain that converts photonic excitation into a charge separation. This chain is Photosystem II reaction center protein J, found in Nicotiana sylvestris (Wood tobacco).